The primary structure comprises 561 residues: Asparagine synthetase [glutamine-hydrolyzing] (561 aa).

C2 functions as the For GATase activity in the catalytic mechanism. One can recognise a Glutamine amidotransferase type-2 domain in the interval 2–191 (CGIWALFGSD…PGHYEVLDLK (190 aa)). Residues 49–53 (RLAVV), 75–77 (NGE), and D97 contribute to the L-glutamine site. An Asparagine synthetase domain is found at 213–536 (HAIYDSVEKL…PGRADWLTHY (324 aa)). Residues L256, I288, and 363–364 (SG) each bind ATP. The residue at position 385 (K385) is an N6-acetyllysine. T545 is modified (phosphothreonine). S557 bears the Phosphoserine mark.

The catalysed reaction is L-aspartate + L-glutamine + ATP + H2O = L-asparagine + L-glutamate + AMP + diphosphate + H(+). It functions in the pathway amino-acid biosynthesis; L-asparagine biosynthesis; L-asparagine from L-aspartate (L-Gln route): step 1/1. The polypeptide is Asparagine synthetase [glutamine-hydrolyzing] (Asns) (Mus musculus (Mouse)).